Reading from the N-terminus, the 661-residue chain is Kininogen-1 (661 aa).

The signal sequence occupies residues 1–20; sequence MKLITTLLLCSGLLLTLTQG. The Cystatin kininogen-type 1 domain maps to 28-131; that stretch reads CNDEAVFQAV…TQTCKIAPSK (104 aa). 9 cysteine pairs are disulfide-bonded: Cys-28/Cys-631, Cys-83/Cys-94, Cys-107/Cys-125, Cys-141/Cys-144, Cys-205/Cys-217, Cys-228/Cys-247, Cys-263/Cys-266, Cys-327/Cys-339, and Cys-350/Cys-369. N-linked (GlcNAc...) asparagine glycosylation occurs at Asn-82. Positions 150–253 constitute a Cystatin kininogen-type 2 domain; it reads TDSPDLEPVL…SQSCTLYSGD (104 aa). Asn-168 and Asn-204 each carry an N-linked (GlcNAc...) asparagine glycan. N-linked (GlcNAc...) asparagine glycosylation is present at Asn-242. A Cystatin kininogen-type 3 domain is found at 272–375; sequence VDSPELKEVL…TVKCQALDMT (104 aa). Residue Ser-331 is modified to Phosphoserine. Disordered regions lie at residues 405–471, 485–583, and 626–661; these read YIAR…LGHG, DGDD…FQDS, and ATSP…DALS. Basic residues-rich tracts occupy residues 434–471 and 492–526; these read KANK…LGHG and TVGH…HGKH. Residues 541–555 are compositionally biased toward low complexity; that stretch reads TESLASSSEYSTTST. Acidic residues predominate over residues 650 to 661; that stretch reads EFSDFDLLDALS.

In terms of assembly, isoform LMW interacts with CRISP3. Post-translationally, bradykinin is released from kininogen by plasma kallikrein. In terms of processing, phosphorylated by FAM20C in the extracellular medium. Bradykinin is inactivated by ACE, which removes the dipeptide Arg-Phe from its C-terminus. In terms of tissue distribution, plasma.

The protein resides in the secreted. It localises to the extracellular space. Kininogens are inhibitors of thiol proteases. HMW-kininogen plays an important role in blood coagulation by helping to position optimally prekallikrein and factor XI next to factor XII; HMW-kininogen inhibits the thrombin- and plasmin-induced aggregation of thrombocytes. LMW-kininogen inhibits the aggregation of thrombocytes. LMW-kininogen is in contrast to HMW-kininogen not involved in blood clotting. Its function is as follows. The active peptide bradykinin is a potent vasodilatator that is released from HMW-kininogen shows a variety of physiological effects: (A) influence in smooth muscle contraction, (B) induction of hypotension, (C) natriuresis and diuresis, (D) decrease in blood glucose level, (E) it is a mediator of inflammation and causes (E1) increase in vascular permeability, (E2) stimulation of nociceptors (4E3) release of other mediators of inflammation (e.g. prostaglandins), (F) it has a cardioprotective effect (directly via bradykinin action, indirectly via endothelium-derived relaxing factor action). In Mus musculus (Mouse), this protein is Kininogen-1 (Kng1).